We begin with the raw amino-acid sequence, 151 residues long: Probable cGMP 3',5'-cyclic phosphodiesterase subunit delta (151 aa).

This sequence belongs to the PDE6D/unc-119 family. As to quaternary structure, interacts with Pde6.

The protein localises to the nucleus. The protein resides in the cytoplasm. The polypeptide is Probable cGMP 3',5'-cyclic phosphodiesterase subunit delta (Anopheles gambiae (African malaria mosquito)).